The primary structure comprises 183 residues: Photosystem II extrinsic protein V (183 aa).

An N-terminal signal peptide occupies residues 1–31; it reads MTFGHCRRASTLRSAFVLGLCGLLLAGCSGA. Cys-84, Cys-87, His-88, and Cys-138 together coordinate heme c.

The protein belongs to the cytochrome c family. PsbV subfamily. PSII is composed of 1 copy each of membrane proteins PsbA, PsbB, PsbC, PsbD, PsbE, PsbF, PsbH, PsbI, PsbJ, PsbK, PsbL, PsbM, PsbT, PsbX, Psb30/Ycf12, peripheral proteins PsbO, CyanoQ (PsbQ), PsbU, PsbV and a large number of cofactors. It forms dimeric complexes. The cofactor is heme c.

The protein localises to the cell inner membrane. Functionally, probably one of the extrinsic, lumenal subunits of photosystem II (PSII). PSII is a light-driven water plastoquinone oxidoreductase, using light energy to abstract electrons from H(2)O, generating a proton gradient subsequently used for ATP formation. The extrinsic proteins stabilize the structure of photosystem II oxygen-evolving complex (OEC), the ion environment of oxygen evolution and protect the OEC against heat-induced inactivation. Low-potential cytochrome c that plays a role in the OEC of PSII. In Gloeobacter violaceus (strain ATCC 29082 / PCC 7421), this protein is Photosystem II extrinsic protein V (psbV1).